Here is a 206-residue protein sequence, read N- to C-terminus: Protein FAM228A (206 aa).

It belongs to the FAM228 family.

This chain is Protein FAM228A (FAM228A), found in Homo sapiens (Human).